The sequence spans 218 residues: Small ribosomal subunit protein uS3c (218 aa).

The 72-residue stretch at Val-47–Glu-118 folds into the KH type-2 domain.

Belongs to the universal ribosomal protein uS3 family. Part of the 30S ribosomal subunit.

The protein localises to the plastid. It is found in the chloroplast. This chain is Small ribosomal subunit protein uS3c (rps3), found in Helianthus annuus (Common sunflower).